The following is a 369-amino-acid chain: DNA replication and repair protein RecF (369 aa).

30–37 lines the ATP pocket; the sequence is GDNAQGKT.

Belongs to the RecF family.

Its subcellular location is the cytoplasm. Its function is as follows. The RecF protein is involved in DNA metabolism; it is required for DNA replication and normal SOS inducibility. RecF binds preferentially to single-stranded, linear DNA. It also seems to bind ATP. This is DNA replication and repair protein RecF from Streptococcus equi subsp. equi (strain 4047).